We begin with the raw amino-acid sequence, 59 residues long: Cuticle protein 7 isoform b (59 aa).

Position 1 is a pyrrolidone carboxylic acid (glutamine 1).

This is Cuticle protein 7 isoform b from Limulus polyphemus (Atlantic horseshoe crab).